Reading from the N-terminus, the 280-residue chain is Diaminopimelate epimerase (280 aa).

Substrate-binding residues include Asn13 and Asn67. Cys76 acts as the Proton donor in catalysis. Residues 77-78 (GN), Asn191, and 208-209 (ER) each bind substrate. Catalysis depends on Cys218, which acts as the Proton acceptor. Substrate is bound at residue 219 to 220 (GT).

It belongs to the diaminopimelate epimerase family. As to quaternary structure, homodimer.

It localises to the cytoplasm. The catalysed reaction is (2S,6S)-2,6-diaminopimelate = meso-2,6-diaminopimelate. It participates in amino-acid biosynthesis; L-lysine biosynthesis via DAP pathway; DL-2,6-diaminopimelate from LL-2,6-diaminopimelate: step 1/1. Functionally, catalyzes the stereoinversion of LL-2,6-diaminopimelate (L,L-DAP) to meso-diaminopimelate (meso-DAP), a precursor of L-lysine. This is Diaminopimelate epimerase from Archaeoglobus fulgidus (strain ATCC 49558 / DSM 4304 / JCM 9628 / NBRC 100126 / VC-16).